A 461-amino-acid chain; its full sequence is Photosystem II CP43 reaction center protein (461 aa).

Residues 1 to 2 constitute a propeptide that is removed on maturation; sequence ME. T3 is subject to N-acetylthreonine. Residue T3 is modified to Phosphothreonine. The next 5 helical transmembrane spans lie at 57–81, 122–143, 166–188, 243–263, and 279–300; these read LFEVSHFVPEKPMYEQGLILLPHIA, LIGPETLEESFPFFGYIWKDKN, KAMYFGGIYDTWAPGGGDVRIIT, TPWPWARRAFVWSGEAYLSYS, and WFNNTAYPSEFYGPTGPEASQA. [CaMn4O5] cluster is bound at residue E355. Residues 435–459 form a helical membrane-spanning segment; that stretch reads RARAAAAGFEKGIDRVDEPVLSMRP.

This sequence belongs to the PsbB/PsbC family. PsbC subfamily. PSII is composed of 1 copy each of membrane proteins PsbA, PsbB, PsbC, PsbD, PsbE, PsbF, PsbH, PsbI, PsbJ, PsbK, PsbL, PsbM, PsbT, PsbX, PsbY, PsbZ, Psb30/Ycf12, at least 3 peripheral proteins of the oxygen-evolving complex and a large number of cofactors. It forms dimeric complexes. Binds multiple chlorophylls and provides some of the ligands for the Ca-4Mn-5O cluster of the oxygen-evolving complex. It may also provide a ligand for a Cl- that is required for oxygen evolution. PSII binds additional chlorophylls, carotenoids and specific lipids. serves as cofactor.

Its subcellular location is the plastid. The protein localises to the chloroplast thylakoid membrane. Its function is as follows. One of the components of the core complex of photosystem II (PSII). It binds chlorophyll and helps catalyze the primary light-induced photochemical processes of PSII. PSII is a light-driven water:plastoquinone oxidoreductase, using light energy to abstract electrons from H(2)O, generating O(2) and a proton gradient subsequently used for ATP formation. In Chlamydomonas moewusii (Chlamydomonas eugametos), this protein is Photosystem II CP43 reaction center protein.